The primary structure comprises 309 residues: Porphobilinogen deaminase (309 aa).

Position 241 is an S-(dipyrrolylmethanemethyl)cysteine (Cys-241).

The protein belongs to the HMBS family. In terms of assembly, monomer. Dipyrromethane serves as cofactor.

It carries out the reaction 4 porphobilinogen + H2O = hydroxymethylbilane + 4 NH4(+). Its pathway is porphyrin-containing compound metabolism; protoporphyrin-IX biosynthesis; coproporphyrinogen-III from 5-aminolevulinate: step 2/4. Functionally, tetrapolymerization of the monopyrrole PBG into the hydroxymethylbilane pre-uroporphyrinogen in several discrete steps. In Campylobacter concisus (strain 13826), this protein is Porphobilinogen deaminase.